Reading from the N-terminus, the 372-residue chain is MKHIVIIGGGFAGVSTAHRFLKNVGKSTTAPYKVTLVSRDSHFFWNIAAPRGIIPGQIPEEKLFQPIAEGFSQYGPDKFEFVLGTATDLDVGGKTLVVDVDGKATRISYDYLIIGSGSRTKIPGPFKSDGSTDGVKQTIHDFQERVKAAKTIVVVGAGPTGVETAGELAFEYGTSKKIILISGGPTVLENRPASVTKTALKQLETLNVDVRVNTKAKDPVTLPDGKKELTLSGGEKLVVDLYIPTFGVLPNSSFVPSQYLDSNGFVQVDQYFQVKGAEGVFAIGDVSDSEAPQFWFVEKQSVHIAKNLILSLSGKAPTPYKASATGMMGLQIGKNSGTGHFGNFKLPGFLVKTIRKTLFVENLPKTVDGSML.

Residues 1–16 (MKHIVIIGGGFAGVST) form the signal peptide. Residues 8-12 (GGGFA) and Arg51 contribute to the 6-hydroxy-FAD site. Asn251 is a glycosylation site (N-linked (GlcNAc...) asparagine). 6-hydroxy-FAD is bound at residue Asp285.

It belongs to the FAD-dependent oxidoreductase family. It depends on 6-hydroxy-FAD as a cofactor.

It functions in the pathway secondary metabolite biosynthesis. In terms of biological role, oxidoreductase; part of the gene cluster that mediates the biosynthesis of pestheic acid, a diphenyl ether which is a biosynthetic precursor of the unique chloropupukeananes. The biosynthesis initiates from condensation of acetate and malonate units catalyzed by the non-reducing PKS ptaA. As the ptaA protein is TE/CLC domain-deficient, hydrolysis and Claisen cyclization of the polyketide could be catalyzed by ptaB containing a beta-lactamase domain. The ptaB protein might hydrolyze the thioester bond between the ACP of ptaA and the intermediate to release atrochrysone carboxylic acid, which is spontaneously dehydrated to form endocrocin anthrone. Endocrocin anthrone is then converted to endocrocin, catalyzed by the anthrone oxygenase ptaC. Spontaneous decarboxylation of endocrocin occurs to generate emodin. An O-methyltransferase (ptaH or ptaI) could methylate emodin to form physcion. PtaJ could then catalyze the oxidative cleavage of physcion, and rotation of the intermediate could then afford desmethylisosulochrin. PtaF, a putative NADH-dependent oxidoreductase, might also participate in the oxidative cleavage step. Desmethylisosulochrin is then transformed by another O-methyltransferase (ptaH or ptaI) to form isosulochrin. Chlorination of isosulochrin by ptaM in the cyclohexadienone B ring then produces chloroisosulochrin. PtaE is responsible for the oxidative coupling reactions of both benzophenones isosulochrin and chloroisosulochrin to RES-1214-1 and pestheic acid respectively, regardless of chlorination. The sequence is that of Oxidoreductase ptaL from Pestalotiopsis fici (strain W106-1 / CGMCC3.15140).